The following is a 476-amino-acid chain: MTWETVIGLEIHVQLNTKSKIFSGASTAFGAEPNAHASVVECALPGVLPVMNREVVEKAIKLGLALDAKINQKNVFDRKNYFYPDLPKGYQISQLDLPIVEHGKLEIVVGDDVKTINVTRAHMEEDAGKSVHEGLNSATGIDLNRAGTPLLEVVSEPEMHSAAEAVAYAKALHSLVTWLDICDGNMAEGSFRVDANVSVRPKGQAEFGTRREIKNLNSFRFLEQAINYEVEAQIEILEDGGKVQQATMLFDPEKGETRVMRLKEDAQDYRYFPDPDLLPVIISDAQMQKAKAEMPELPKEMAARFVADYGVSDYDARLLTASRAQAAYFEEAAKESGQGKPTANWMNGELAAALNKAGLELADSPITAPRLAALVGKIADGTLSSKLAKKAFEAMWAEPEATIAEIIEKHGLQQMTDTGAVEAIVDEVLANNAKAVEQFKSGNEKALNAIVGQVMKASKGKANPAQVQELIKAKLA.

It belongs to the GatB/GatE family. GatB subfamily. As to quaternary structure, heterotrimer of A, B and C subunits.

It carries out the reaction L-glutamyl-tRNA(Gln) + L-glutamine + ATP + H2O = L-glutaminyl-tRNA(Gln) + L-glutamate + ADP + phosphate + H(+). It catalyses the reaction L-aspartyl-tRNA(Asn) + L-glutamine + ATP + H2O = L-asparaginyl-tRNA(Asn) + L-glutamate + ADP + phosphate + 2 H(+). Its function is as follows. Allows the formation of correctly charged Asn-tRNA(Asn) or Gln-tRNA(Gln) through the transamidation of misacylated Asp-tRNA(Asn) or Glu-tRNA(Gln) in organisms which lack either or both of asparaginyl-tRNA or glutaminyl-tRNA synthetases. The reaction takes place in the presence of glutamine and ATP through an activated phospho-Asp-tRNA(Asn) or phospho-Glu-tRNA(Gln). This is Aspartyl/glutamyl-tRNA(Asn/Gln) amidotransferase subunit B from Neisseria meningitidis serogroup C (strain 053442).